We begin with the raw amino-acid sequence, 686 residues long: CAI-1 autoinducer sensor kinase/phosphatase CqsS (686 aa).

Transmembrane regions (helical) follow at residues 21 to 41 (LVGW…EYWF), 47 to 64 (NLGL…LVFR), 77 to 97 (GYFL…MMLM), 100 to 120 (WSTI…LLVH), 124 to 144 (VMAL…YGLT), and 152 to 172 (IEWQ…LCFF). Positions 191–416 (GIAHEMRNPL…EFVLSFPRYD (226 aa)) constitute a Histidine kinase domain. Histidine 194 carries the phosphohistidine; by autocatalysis modification. The Response regulatory domain occupies 569–686 (RILVVDDNQS…VLLNKVAAWV (118 aa)). At aspartate 618 the chain carries 4-aspartylphosphate.

It is found in the cell membrane. The catalysed reaction is ATP + protein L-histidine = ADP + protein N-phospho-L-histidine.. Senses the quorum-sensing autoinducer CAI-1 ((S)-3-hydroxytridecan-4-one) which probably functions as an intragenus signal. The sensory signal is then relayed to LuxU and LuxO. This Vibrio cholerae serotype O1 (strain ATCC 39315 / El Tor Inaba N16961) protein is CAI-1 autoinducer sensor kinase/phosphatase CqsS (cqsS).